The chain runs to 219 residues: Thymidylate kinase (219 aa).

Residue 9–16 (GIEGSGKT) participates in ATP binding.

This sequence belongs to the thymidylate kinase family.

The enzyme catalyses dTMP + ATP = dTDP + ADP. Functionally, phosphorylation of dTMP to form dTDP in both de novo and salvage pathways of dTTP synthesis. In Pelobacter propionicus (strain DSM 2379 / NBRC 103807 / OttBd1), this protein is Thymidylate kinase.